Consider the following 222-residue polypeptide: Zinc finger C2HC domain-containing protein 1B (222 aa).

The C2HC/C3H-type 1 zinc-finger motif lies at 14–43 (ELFPCEVCGRRFAADVLERHGPICKKLFNR). Residues C18, C21, H33, and C37 each coordinate Zn(2+). A disordered region spans residues 48 to 78 (FSSLKQRLQGTDIPTVKKTPQSKSPPVRKSN). The C2HC/C3H-type 2; degenerate zinc finger occupies 117-146 (DYIQRPYCMRRFNESAAERHTNFCKDQSSR). The disordered stretch occupies residues 196–222 (PTKSGLAMDPASGAKLRQGFSKSSKKD).

The protein belongs to the ZC2HC1 family. Zn(2+) serves as cofactor.

This is Zinc finger C2HC domain-containing protein 1B (ZC2HC1B) from Homo sapiens (Human).